Consider the following 490-residue polypeptide: O-acetyltransferase PaAT-2 (490 aa).

The Proton acceptor role is filled by histidine 165.

This sequence belongs to the plant acyltransferase family.

The protein operates within mycotoxin biosynthesis. Its function is as follows. O-acetyltransferase; part of the 2 gene clusters that mediate the biosynthesis of fusicoccins, diterpene glucosides that display phytohormone-like activity and function as potent activators of plasma membrane H(+)-ATPases in plants by modifying 14-3-3 proteins and cause the plant disease constriction canker. The first step in the pathway is performed by the fusicoccadiene synthase PaFS that possesses both prenyl transferase and terpene cyclase activity, converting isopentenyl diphosphate and dimethylallyl diphosphate into geranylgeranyl diphosphate (GGDP) and successively converting GGDP into fusicocca-2,10(14)-diene, a precursor for fusicoccin H. The second step is the oxidation at the C-8 position by the cytochrome P450 monooxygenase PaP450-2 to yield fusicocca-2,10(14)-diene-8-beta-ol. The cytochrome P450 monooxygenase PaP450-1 then catalyzes the hydroxylation at the C-16 position to produce fusicocca-2,10(14)-diene-8-beta,16-diol. The dioxygenase fc-dox then catalyzes the 16-oxydation of fusicocca-2,10(14)-diene-8-beta,16-diol to yield an aldehyde (8-beta-hydroxyfusicocca-1,10(14)-dien-16-al). The short-chain dehydrogenase/reductase fc-sdr catalyzes the reduction of the aldehyde to yield fusicocca-1,10(14)-diene-8-beta,16-diol. The next step is the hydroxylation at C-9 performed by the cytochrome P450 monooxygenase PaP450-3 that leads to fusicoccin H aglycon which is glycosylated to fusicoccin H by the O-glycosyltransferase PaGT. Hydroxylation at C-12 by the cytochrome P450 monooxygenase PaP450-4 leads then to the production of fusicoccin Q and is followed by methylation by the O-methyltransferase PaMT to yield fusicoccin P. Fusicoccin P is further converted to fusicoccin J via prenylation by the O-glucose prenyltransferase PaPT. Cytochrome P450 monooxygenase PaP450-5 then performs hydroxylation at C-19 to yield dideacetyl-fusicoccin A which is acetylated to 3'-O-deacetyl-fusicoccin A by the O-acetyltransferase PaAT-2. Finally, a another acetylation by the O-acetyltransferase PaAT-1 yields fusicoccin A. The polypeptide is O-acetyltransferase PaAT-2 (Phomopsis amygdali (Fusicoccum amygdali)).